Consider the following 338-residue polypeptide: Tagatose 1,6-diphosphate aldolase (338 aa).

It belongs to the aldolase LacD family.

The enzyme catalyses D-tagatofuranose 1,6-bisphosphate = D-glyceraldehyde 3-phosphate + dihydroxyacetone phosphate. Its pathway is carbohydrate metabolism; D-tagatose 6-phosphate degradation; D-glyceraldehyde 3-phosphate and glycerone phosphate from D-tagatose 6-phosphate: step 2/2. The polypeptide is Tagatose 1,6-diphosphate aldolase (Listeria monocytogenes serovar 1/2a (strain ATCC BAA-679 / EGD-e)).